We begin with the raw amino-acid sequence, 683 residues long: Acyl-CoA synthetase short-chain family member 3, mitochondrial (683 aa).

The transit peptide at 1 to 29 (MKPSWLQCRKVTGAGTLGAPLPGSPSVRG) directs the protein to the mitochondrion. 223–226 (EPGR) is a binding site for CoA. ATP-binding positions include 421–423 (GER) and 442–447 (DHWWQT). Lysine 514 is subject to N6-succinyllysine. Position 520 is an N6-acetyllysine (lysine 520). The ATP site is built by aspartate 535, arginine 550, and arginine 561. Arginine 620 is a binding site for CoA.

It belongs to the ATP-dependent AMP-binding enzyme family. In terms of tissue distribution, expressed in a wide range of tissues, with the highest levels observed in the liver followed by kidney.

The protein resides in the mitochondrion matrix. It carries out the reaction acetate + ATP + CoA = acetyl-CoA + AMP + diphosphate. The enzyme catalyses propanoate + ATP + CoA = propanoyl-CoA + AMP + diphosphate. It catalyses the reaction butanoate + ATP + CoA = butanoyl-CoA + AMP + diphosphate. Its function is as follows. Catalyzes the synthesis of acetyl-CoA from short-chain fatty acids. Propionate is the preferred substrate but can also utilize acetate and butyrate with a much lower affinity. The sequence is that of Acyl-CoA synthetase short-chain family member 3, mitochondrial (Acss3) from Rattus norvegicus (Rat).